The chain runs to 207 residues: Outer-membrane lipoprotein LolB (207 aa).

The signal sequence occupies residues 1-21; the sequence is MPQRKISFYRLLPLATLLLAA. Cys22 is lipidated: N-palmitoyl cysteine. Cys22 carries the S-diacylglycerol cysteine lipid modification.

Belongs to the LolB family. Monomer.

It localises to the cell outer membrane. Functionally, plays a critical role in the incorporation of lipoproteins in the outer membrane after they are released by the LolA protein. This Yersinia enterocolitica serotype O:8 / biotype 1B (strain NCTC 13174 / 8081) protein is Outer-membrane lipoprotein LolB.